We begin with the raw amino-acid sequence, 377 residues long: Glutamate 5-kinase (377 aa).

K18 is a binding site for ATP. The substrate site is built by S59, D146, and N158. Residues S178–D179 and T222–K228 each bind ATP. Residues Q286 to T363 form the PUA domain.

This sequence belongs to the glutamate 5-kinase family.

Its subcellular location is the cytoplasm. It catalyses the reaction L-glutamate + ATP = L-glutamyl 5-phosphate + ADP. It functions in the pathway amino-acid biosynthesis; L-proline biosynthesis; L-glutamate 5-semialdehyde from L-glutamate: step 1/2. Functionally, catalyzes the transfer of a phosphate group to glutamate to form L-glutamate 5-phosphate. This chain is Glutamate 5-kinase, found in Caulobacter vibrioides (strain ATCC 19089 / CIP 103742 / CB 15) (Caulobacter crescentus).